A 688-amino-acid chain; its full sequence is Translation initiation factor IF-2 (688 aa).

Composition is skewed to basic and acidic residues over residues 53–62 (GKEKSEKTKE) and 86–95 (KRDDKNEKVN). The interval 53–100 (GKEKSEKTKEEDDEIETTAKNPIKESMNNKKSNKRDDKNEKVNTENAE) is disordered. The 168-residue stretch at 187-354 (KRSPIITVMG…MILLSSEILE (168 aa)) folds into the tr-type G domain. The tract at residues 196–203 (GHVDHGKT) is G1. Position 196-203 (196-203 (GHVDHGKT)) interacts with GTP. The segment at 221–225 (GITQH) is G2. A G3 region spans residues 242-245 (DTPG). GTP-binding positions include 242–246 (DTPGH) and 296–299 (NKID). The interval 296–299 (NKID) is G4. Residues 332–334 (SAH) are G5.

Belongs to the TRAFAC class translation factor GTPase superfamily. Classic translation factor GTPase family. IF-2 subfamily.

The protein localises to the cytoplasm. In terms of biological role, one of the essential components for the initiation of protein synthesis. Protects formylmethionyl-tRNA from spontaneous hydrolysis and promotes its binding to the 30S ribosomal subunits. Also involved in the hydrolysis of GTP during the formation of the 70S ribosomal complex. The chain is Translation initiation factor IF-2 from Clostridium botulinum (strain Kyoto / Type A2).